Consider the following 376-residue polypeptide: Probable dual-specificity RNA methyltransferase RlmN (376 aa).

The tract at residues 1–25 is disordered; it reads MSDSERTSLPLVFDEPRGRKKPPRH. E113 (proton acceptor) is an active-site residue. The Radical SAM core domain occupies 119-362; it reads YPDRATMCVS…PTTVRDTRGR (244 aa). The cysteines at positions 126 and 368 are disulfide-linked. Residues C133, C137, and C140 each coordinate [4Fe-4S] cluster. Residues 188–189, S222, 245–247, and N325 contribute to the S-adenosyl-L-methionine site; these read GE and SLH. C368 (S-methylcysteine intermediate) is an active-site residue.

It belongs to the radical SAM superfamily. RlmN family. [4Fe-4S] cluster is required as a cofactor.

The protein resides in the cytoplasm. The catalysed reaction is adenosine(2503) in 23S rRNA + 2 reduced [2Fe-2S]-[ferredoxin] + 2 S-adenosyl-L-methionine = 2-methyladenosine(2503) in 23S rRNA + 5'-deoxyadenosine + L-methionine + 2 oxidized [2Fe-2S]-[ferredoxin] + S-adenosyl-L-homocysteine. The enzyme catalyses adenosine(37) in tRNA + 2 reduced [2Fe-2S]-[ferredoxin] + 2 S-adenosyl-L-methionine = 2-methyladenosine(37) in tRNA + 5'-deoxyadenosine + L-methionine + 2 oxidized [2Fe-2S]-[ferredoxin] + S-adenosyl-L-homocysteine. Functionally, specifically methylates position 2 of adenine 2503 in 23S rRNA and position 2 of adenine 37 in tRNAs. The polypeptide is Probable dual-specificity RNA methyltransferase RlmN (Nocardioides sp. (strain ATCC BAA-499 / JS614)).